A 918-amino-acid polypeptide reads, in one-letter code: Chitin synthase C (918 aa).

Residues 1-63 (MSYNRLGDPY…EMPSSDRLAE (63 aa)) are disordered. Residues 22–37 (NPSSLSNRSPSPGRPL) are compositionally biased toward low complexity. A run of 4 helical transmembrane segments spans residues 562–581 (WLNGSFFAAVYAITHFYQLW), 605–625 (LFAWFGIGNFFLVFHILTTYL), 637–657 (VLGVVFEWLYLATLVTCFVLS), and 672–692 (MVYLWVFIMIYLAFAAVFVTV). N-linked (GlcNAc...) asparagine glycosylation is present at N712. The next 3 membrane-spanning stretches (helical) occupy residues 715–735 (FFSIIVSLGSTYVMWFIASII), 845–865 (VVLVWVFCNFALGAVVLSSAG), and 890–910 (VVLWSVAGLSIFKFLGAMWFL).

The protein belongs to the chitin synthase family. Class I subfamily. As to expression, mainly expressed in hyphae and conidiphores. Relatively strongly expressed in young cleistothecia and in mature ascospores, but negligible in Huelle cells.

It localises to the cell membrane. Its subcellular location is the cell septum. It is found in the cell tip. It catalyses the reaction [(1-&gt;4)-N-acetyl-beta-D-glucosaminyl](n) + UDP-N-acetyl-alpha-D-glucosamine = [(1-&gt;4)-N-acetyl-beta-D-glucosaminyl](n+1) + UDP + H(+). Functionally, polymerizes chitin, a structural polymer of the cell wall and septum, by transferring the sugar moiety of UDP-GlcNAc to the non-reducing end of the growing chitin polymer. ChsC and chsA share critical functions in hyphal wall integrity and differentiation. ChsA and chsC share also overlapping roles in septum formation. The chain is Chitin synthase C from Emericella nidulans (strain FGSC A4 / ATCC 38163 / CBS 112.46 / NRRL 194 / M139) (Aspergillus nidulans).